A 364-amino-acid chain; its full sequence is tRNA(Met) cytidine acetate ligase (364 aa).

Residues 7–20 (IAEF…HKYL), Gly96, Asn152, and Arg175 contribute to the ATP site.

This sequence belongs to the TmcAL family.

The protein resides in the cytoplasm. It catalyses the reaction cytidine(34) in elongator tRNA(Met) + acetate + ATP = N(4)-acetylcytidine(34) in elongator tRNA(Met) + AMP + diphosphate. Catalyzes the formation of N(4)-acetylcytidine (ac(4)C) at the wobble position of elongator tRNA(Met), using acetate and ATP as substrates. First activates an acetate ion to form acetyladenylate (Ac-AMP) and then transfers the acetyl group to tRNA to form ac(4)C34. The polypeptide is tRNA(Met) cytidine acetate ligase (Streptococcus sanguinis (strain SK36)).